The primary structure comprises 138 residues: Small ribosomal subunit protein uS11c (138 aa).

The segment at M1 to L22 is disordered. The span at G9–L22 shows a compositional bias: basic residues.

Belongs to the universal ribosomal protein uS11 family. In terms of assembly, part of the 30S ribosomal subunit.

The protein resides in the plastid. Its subcellular location is the chloroplast. The polypeptide is Small ribosomal subunit protein uS11c (Lotus japonicus (Lotus corniculatus var. japonicus)).